Consider the following 94-residue polypeptide: Pyrimidine/purine nucleoside phosphorylase (94 aa).

This sequence belongs to the nucleoside phosphorylase PpnP family.

The enzyme catalyses a purine D-ribonucleoside + phosphate = a purine nucleobase + alpha-D-ribose 1-phosphate. It catalyses the reaction adenosine + phosphate = alpha-D-ribose 1-phosphate + adenine. The catalysed reaction is cytidine + phosphate = cytosine + alpha-D-ribose 1-phosphate. It carries out the reaction guanosine + phosphate = alpha-D-ribose 1-phosphate + guanine. The enzyme catalyses inosine + phosphate = alpha-D-ribose 1-phosphate + hypoxanthine. It catalyses the reaction thymidine + phosphate = 2-deoxy-alpha-D-ribose 1-phosphate + thymine. The catalysed reaction is uridine + phosphate = alpha-D-ribose 1-phosphate + uracil. It carries out the reaction xanthosine + phosphate = alpha-D-ribose 1-phosphate + xanthine. Catalyzes the phosphorolysis of diverse nucleosides, yielding D-ribose 1-phosphate and the respective free bases. Can use uridine, adenosine, guanosine, cytidine, thymidine, inosine and xanthosine as substrates. Also catalyzes the reverse reactions. This is Pyrimidine/purine nucleoside phosphorylase from Teredinibacter turnerae (strain ATCC 39867 / T7901).